Consider the following 526-residue polypeptide: MVAKDYPFYLTVKRANCSLELPPASGPAKDAEEPSNKRVKPLSRVTSLANLIPPVKATPLKRFSQTLQRSISFRSESRPDILAPRPWSRNAAPSSTKRRDSKLWSETFDVCVNQMLTSKEIKRQEAIFELSQGEEDLIEDLKLAKKAYHDPMLKLSIMTEQELNQIFGTLDSLIPLHEELLSQLRDVRKPDGSTEHVGPILVGWLPCLSSYDSYCSNQVAAKALLDHKKQDHRVQDFLQRCLESPFSRKLDLWNFLDIPRSRLVKYPLLLREILRHTPNDNPDQQHLEEAINIIQGIVAEINTKTGESECRYYKERLLYLEEGQKDSLIDSSRVLCCHGELKNNRGVKLHVFLFQEVLVITRAVTHNEQLCYQLYRQPIPVKDLLLEDLQDGEVRLGGSLRGAFSNNERIKNFFRVSFKNGSQSQTHSLQANDTFNKQQWLNCIRQAKETVLCAAGQAGVLDSEGSFLNPTTGSRELQGETKLEQMDQSDSESDCSMDTSEVSLDCERMEQTDSSCGNSRHGESNV.

The interval 20-40 (ELPPASGPAKDAEEPSNKRVK) is disordered. A phosphoserine mark is found at serine 47 and serine 70. Residues 122–304 (KRQEAIFELS…QGIVAEINTK (183 aa)) form the DH domain. One can recognise a PH domain in the interval 291-449 (INIIQGIVAE…WLNCIRQAKE (159 aa)). The segment at 464–526 (EGSFLNPTTG…GNSRHGESNV (63 aa)) is disordered. Residues 466 to 475 (SFLNPTTGSR) are compositionally biased toward polar residues.

In terms of assembly, interacts with RHOA and RHOB. In terms of tissue distribution, widely expressed. Highest levels are found in adult brain and skeletal muscle. Lower levels are found in heart and kidney.

The protein localises to the cytoplasm. Acts as a guanine nucleotide exchange factor (GEF) for RhoA and RhoB GTPases. This is Rho guanine nucleotide exchange factor 3 (ARHGEF3) from Homo sapiens (Human).